The following is a 148-amino-acid chain: Ubiquitin-conjugating enzyme E2-17 kDa (148 aa).

One can recognise a UBC core domain in the interval 1–147; sequence MASKRILKEL…ARSWTQKYAM (147 aa). Residue C85 is the Glycyl thioester intermediate of the active site.

The protein belongs to the ubiquitin-conjugating enzyme family.

It carries out the reaction S-ubiquitinyl-[E1 ubiquitin-activating enzyme]-L-cysteine + [E2 ubiquitin-conjugating enzyme]-L-cysteine = [E1 ubiquitin-activating enzyme]-L-cysteine + S-ubiquitinyl-[E2 ubiquitin-conjugating enzyme]-L-cysteine.. It participates in protein modification; protein ubiquitination. Its function is as follows. Catalyzes the covalent attachment of ubiquitin to other proteins. Mediates the selective degradation of short-lived and abnormal proteins. This is Ubiquitin-conjugating enzyme E2-17 kDa from Solanum lycopersicum (Tomato).